We begin with the raw amino-acid sequence, 331 residues long: Glycerophosphodiester phosphodiesterase 1 (331 aa).

Residues 1–3 (MWL) lie on the Cytoplasmic side of the membrane. Residues 4-24 (WEDQGGLLGPFSFVLVLLLVV) traverse the membrane as a helical segment. Topologically, residues 25–248 (TRSPFNACVL…PRYSVFWKQS (224 aa)) are lumenal. A GP-PDE domain is found at 65–331 (VSAIAHRGGS…SMLEDCAPHF (267 aa)). Residues Glu97 and Asp99 each coordinate Mg(2+). A glycan (N-linked (GlcNAc...) asparagine) is linked at Asn168. Residue Asp174 coordinates Mg(2+). The chain crosses the membrane as a helical span at residues 249 to 269 (VFVVLDILLDWSMHNVLWYLC). The Cytoplasmic segment spans residues 270 to 331 (GISAFLMQKD…SMLEDCAPHF (62 aa)).

Belongs to the glycerophosphoryl diester phosphodiesterase family. Interacts with PRAF2. Interacts with RGS16. Mg(2+) is required as a cofactor. Post-translationally, N-glycosylated. Widely expressed. Highly expressed in the brain and spinal cord, followed by kidney, liver, and testis. In contrast, little or no expression is detected in the heart or spleen.

The protein localises to the cell membrane. Its subcellular location is the cytoplasmic vesicle membrane. The catalysed reaction is sn-glycero-3-phospho-1D-myo-inositol + H2O = myo-inositol + sn-glycerol 3-phosphate + H(+). It catalyses the reaction 1-O-(1Z-octadecenyl)-sn-glycero-3-phospho-(N-5Z,8Z,11Z,14Z-eicosatetraenoyl)-ethanolamine + H2O = 1-O-(1Z-octadecenyl)-sn-glycero-3-phosphate + N-(5Z,8Z,11Z,14Z-eicosatetraenoyl)-ethanolamine + H(+). The enzyme catalyses 1-O-(1Z-octadecenyl)-sn-glycero-3-phospho-(N-9Z-octadecenoyl)-ethanolamine + H2O = 1-O-(1Z-octadecenyl)-sn-glycero-3-phosphate + N-(9Z-octadecenoyl) ethanolamine + H(+). It carries out the reaction 1-O-(1Z-octadecenyl)-sn-glycero-3-phospho-N-hexadecanoyl-ethanolamine + H2O = 1-O-(1Z-octadecenyl)-sn-glycero-3-phosphate + N-hexadecanoylethanolamine + H(+). The catalysed reaction is N-(4Z,7Z,10Z,13Z,16Z,19Z)-docosahexaenoyl-sn-glycero-3-phosphoethanolamine + H2O = N-(4Z,7Z,10Z,13Z,16Z,19Z)-docosahexaenoyl ethanolamine + sn-glycerol 3-phosphate + H(+). It catalyses the reaction N-eicosanoyl-sn-glycero-3-phosphoethanolamine + H2O = N-eicosanoyl ethanolamine + sn-glycerol 3-phosphate + H(+). The enzyme catalyses N-hexadecanoyl-sn-glycero-3-phosphoethanolamine + H2O = N-hexadecanoylethanolamine + sn-glycerol 3-phosphate + H(+). It carries out the reaction N-(9Z-octadecenoyl)-sn-glycero-3-phosphoethanolamine + H2O = N-(9Z-octadecenoyl) ethanolamine + sn-glycerol 3-phosphate + H(+). The catalysed reaction is N-(5Z,8Z,11Z,14Z-eicosatetraenoyl)-sn-glycero-3-phosphoethanolamine + H2O = N-(5Z,8Z,11Z,14Z-eicosatetraenoyl)-ethanolamine + sn-glycerol 3-phosphate + H(+). Its activity is regulated as follows. Inhibited by EDTA, calcium chloride, and zinc chloride. Enhanced by magnesium chloride. Glycerophosphodiester phosphodiesterase activity can be modulated by G-protein signaling pathways. Hydrolyzes the phosphodiester bond of glycerophosphodiesters such as glycerophosphoinositol (GroPIns) and glycerophosphoethanolamine (GroPEth), to yield a glycerol phosphate and an alcohol. Hydrolyzes glycerophospho-N-acylethanolamines to N-acylethanolamines in the brain and participates in bioactive N-acylethanolamine biosynthesis such as anandamide (an endocannabinoid), N-palmitoylethanolamine (an anti-inflammatory), and N-oleoylethanolamine (an anorexic). In addition, has a lysophospholipase D activity by hydrolyzing N-acyl-lysoplasmenylethanolamine (N-acyl-lysoPlsEt) to N-acylethanolamine. However lysophospholipase D activity is lower than glycerophosphodiester phosphodiesterase activity. Has little or no activity towards glycerophosphocholine. The protein is Glycerophosphodiester phosphodiesterase 1 of Mus musculus (Mouse).